The sequence spans 494 residues: Membrane-bound lytic murein transglycosylase F 1 (494 aa).

The signal sequence occupies residues 1–24 (MRIMAVRLVAGAITLALMAYAWLA). Residues 25 to 270 (WERARDPEPI…TLLEEHFGHL (246 aa)) are non-LT domain. The segment at 271–494 (GRFDYVGFRA…APLPADPPAD (224 aa)) is LT domain. Residue glutamate 317 is part of the active site. The disordered stretch occupies residues 464–494 (QVPAGEALGEPPLPTPPAPPGAPLPADPPAD). The segment covering 474-494 (PPLPTPPAPPGAPLPADPPAD) has biased composition (pro residues).

It in the N-terminal section; belongs to the bacterial solute-binding protein 3 family. This sequence in the C-terminal section; belongs to the transglycosylase Slt family.

It is found in the cell outer membrane. The enzyme catalyses Exolytic cleavage of the (1-&gt;4)-beta-glycosidic linkage between N-acetylmuramic acid (MurNAc) and N-acetylglucosamine (GlcNAc) residues in peptidoglycan, from either the reducing or the non-reducing ends of the peptidoglycan chains, with concomitant formation of a 1,6-anhydrobond in the MurNAc residue.. Functionally, murein-degrading enzyme that degrades murein glycan strands and insoluble, high-molecular weight murein sacculi, with the concomitant formation of a 1,6-anhydromuramoyl product. Lytic transglycosylases (LTs) play an integral role in the metabolism of the peptidoglycan (PG) sacculus. Their lytic action creates space within the PG sacculus to allow for its expansion as well as for the insertion of various structures such as secretion systems and flagella. This Alkalilimnicola ehrlichii (strain ATCC BAA-1101 / DSM 17681 / MLHE-1) protein is Membrane-bound lytic murein transglycosylase F 1.